The primary structure comprises 401 residues: Subtilisin-like protease 7 (401 aa).

The N-terminal stretch at 1 to 20 (MGFITKAIPLALAAASVING) is a signal peptide. Residues 21–119 (AEILETRAGV…IERDARVQIN (99 aa)) constitute a propeptide that is removed on maturation. Residues 36 to 118 (KYIVVMNDGM…YIERDARVQI (83 aa)) form the Inhibitor I9 domain. A glycan (N-linked (GlcNAc...) asparagine) is linked at Asn58. In terms of domain architecture, Peptidase S8 spans 129 to 401 (SWGLARVGSR…SKLINNGSGM (273 aa)). Active-site charge relay system residues include Asp161 and His193. Asn223 and Asn253 each carry an N-linked (GlcNAc...) asparagine glycan. Ser347 serves as the catalytic Charge relay system. The N-linked (GlcNAc...) asparagine glycan is linked to Asn397.

Belongs to the peptidase S8 family.

Its subcellular location is the secreted. In terms of biological role, secreted subtilisin-like serine protease with keratinolytic activity that contributes to pathogenicity. The polypeptide is Subtilisin-like protease 7 (SUB7) (Trichophyton tonsurans (Scalp ringworm fungus)).